Consider the following 102-residue polypeptide: Putative nuclear receptor corepressor 1-like protein NCOR1P1 (102 aa).

Residues 1-18 show a composition bias toward polar residues; it reads MSSSGYPPNQGAFSTEQS. Positions 1–68 are disordered; that stretch reads MSSSGYPPNQ…DQNASPSKLS (68 aa). The stretch at 68 to 100 forms a coiled coil; sequence SKEELIECMDRVDREIAKVEQQILKLKKKQVKV.

It belongs to the N-CoR nuclear receptor corepressors family.

The polypeptide is Putative nuclear receptor corepressor 1-like protein NCOR1P1 (NCOR1P1) (Homo sapiens (Human)).